The following is a 579-amino-acid chain: ATP-dependent RNA helicase SUV3, mitochondrial (579 aa).

The N-terminal 59 residues, 1 to 59, are a transit peptide targeting the mitochondrion; the sequence is MAVAAALLRRRALYSALASPSWLHDTSSCYICSISGTHSLVNHPNLRLQRGYHNSGKFD. The region spanning 72–213 is the Helicase ATP-binding domain; that stretch reads NAREKKRNVF…QRILEPTGDV (142 aa). An ATP-binding site is contributed by 85-92; the sequence is GPTNSGKT. The Helicase C-terminal domain occupies 214 to 388; sequence VTVQYYERLS…GLFPTFDVLS (175 aa). A glycan (N-linked (GlcNAc...) asparagine) is linked at Asn309.

Belongs to the helicase family. Homodimer; in free form. Component of the mitochondrial degradosome (mtEXO) complex which is a heteropentamer containing 2 copies of SUPV3L1 and 3 copies of PNPT1. Mg(2+) is required as a cofactor. Mn(2+) serves as cofactor.

Its subcellular location is the nucleus. The protein resides in the mitochondrion matrix. It localises to the mitochondrion nucleoid. The enzyme catalyses ATP + H2O = ADP + phosphate + H(+). Major helicase player in mitochondrial RNA metabolism. Component of the mitochondrial degradosome (mtEXO) complex, that degrades 3' overhang double-stranded RNA with a 3'-to-5' directionality in an ATP-dependent manner. ATPase and ATP-dependent multisubstrate helicase, able to unwind double-stranded (ds) DNA and RNA, and RNA/DNA heteroduplexes in the 5'-to-3' direction. Plays a role in the RNA surveillance system in mitochondria; regulates the stability of mature mRNAs, the removal of aberrantly formed mRNAs and the rapid degradation of non coding processing intermediates. Confers salinity and drought stress tolerances by maintaining both photosynthesis and antioxidant machinery, probably via an increase in plant hormones levels such as gibberellic acid (GA(3)), the cytokinin zeatin (Z) and indole-3-acetic acid (IAA). The chain is ATP-dependent RNA helicase SUV3, mitochondrial from Oryza sativa subsp. japonica (Rice).